The sequence spans 508 residues: Probable cytosol aminopeptidase (508 aa).

K274 and D279 together coordinate Mn(2+). K286 is a catalytic residue. 3 residues coordinate Mn(2+): D297, D356, and E358. The active site involves R360.

This sequence belongs to the peptidase M17 family. Mn(2+) is required as a cofactor.

It is found in the cytoplasm. It carries out the reaction Release of an N-terminal amino acid, Xaa-|-Yaa-, in which Xaa is preferably Leu, but may be other amino acids including Pro although not Arg or Lys, and Yaa may be Pro. Amino acid amides and methyl esters are also readily hydrolyzed, but rates on arylamides are exceedingly low.. The catalysed reaction is Release of an N-terminal amino acid, preferentially leucine, but not glutamic or aspartic acids.. Its function is as follows. Presumably involved in the processing and regular turnover of intracellular proteins. Catalyzes the removal of unsubstituted N-terminal amino acids from various peptides. This Paraburkholderia phytofirmans (strain DSM 17436 / LMG 22146 / PsJN) (Burkholderia phytofirmans) protein is Probable cytosol aminopeptidase.